A 314-amino-acid polypeptide reads, in one-letter code: MPLDVVVVMDPITGIKIAKDTTFALLLEAQRRSHRLHYVHPGSLSLNEGRTFAQTAPLQVRDNKTDWYTLGEFSETQLGQGQIILMRKDPPVNAEFIYDTQLLSIAQAAGAQVINHPQGLRDLNEKIAAQLFPQCCPPTLISRDMRALKMFVQKQEQAILKPLDGMGGHSIFRSSNGDPNLNVILETLTDGGRTLAIAQRYLQQIIEGDKRILLIDGVPIDHCLARIPQGDEFRGNMAAGGRGESRPLNERDRWIAAQVGPEMRRRGMRFVGIDVIGDYLTEINVTSPTCLRELDAQCGLNIAGQLFDAIETGG.

One can recognise an ATP-grasp domain in the interval 125–311; it reads EKIAAQLFPQ…IAGQLFDAIE (187 aa). 151–208 provides a ligand contact to ATP; that stretch reads FVQKQEQAILKPLDGMGGHSIFRSSNGDPNLNVILETLTDGGRTLAIAQRYLQQIIEG. Mg(2+) is bound by residues glutamate 282 and asparagine 284.

Belongs to the prokaryotic GSH synthase family. Mg(2+) is required as a cofactor. Mn(2+) serves as cofactor.

The enzyme catalyses gamma-L-glutamyl-L-cysteine + glycine + ATP = glutathione + ADP + phosphate + H(+). The protein operates within sulfur metabolism; glutathione biosynthesis; glutathione from L-cysteine and L-glutamate: step 2/2. This Xylella fastidiosa (strain Temecula1 / ATCC 700964) protein is Glutathione synthetase.